A 442-amino-acid chain; its full sequence is Cyclic 2,3-diphosphoglycerate synthetase (442 aa).

This sequence belongs to the cyclic 2,3-diphosphoglycerate synthetase family.

Its subcellular location is the cytoplasm. It catalyses the reaction (2R)-2,3-bisphosphoglycerate + ATP + H(+) = cyclic (2R)-2,3-bisphosphoglycerate + ADP + phosphate. Catalyzes the formation of cyclic 2,3-diphosphoglycerate (cDPG) by formation of an intramolecular phosphoanhydride bond at the expense of ATP. This Rubrobacter xylanophilus (strain DSM 9941 / JCM 11954 / NBRC 16129 / PRD-1) protein is Cyclic 2,3-diphosphoglycerate synthetase.